A 288-amino-acid chain; its full sequence is Small ribosomal subunit protein uS15m (288 aa).

Residues 1–50 (MRLFEGAFQPWKLASTNLMQQCLLLNKKSQFHTTCILQGLKKQKANQRRK) constitute a mitochondrion transit peptide.

The protein belongs to the universal ribosomal protein uS15 family. Component of the mitochondrial small ribosomal subunit (mt-SSU). Mature yeast 74S mitochondrial ribosomes consist of a small (37S) and a large (54S) subunit. The 37S small subunit contains a 15S ribosomal RNA (15S mt-rRNA) and at least 32 different proteins. The 54S large subunit contains a 21S rRNA (21S mt-rRNA) and at least 45 different proteins.

It localises to the mitochondrion. Functionally, component of the mitochondrial ribosome (mitoribosome), a dedicated translation machinery responsible for the synthesis of mitochondrial genome-encoded proteins, including at least some of the essential transmembrane subunits of the mitochondrial respiratory chain. The mitoribosomes are attached to the mitochondrial inner membrane and translation products are cotranslationally integrated into the membrane. In Schizosaccharomyces pombe (strain 972 / ATCC 24843) (Fission yeast), this protein is Small ribosomal subunit protein uS15m (mrps28).